The primary structure comprises 741 residues: NAD(P)H-quinone oxidoreductase subunit 5, chloroplastic (741 aa).

16 consecutive transmembrane segments (helical) span residues Trp9–Ile29, Ile39–Ser59, Ile89–Ile109, Phe125–Ile145, Ile147–Thr167, Ile184–Glu204, Ile216–Val238, Thr258–Ala278, Leu280–Ile300, Leu327–Ile347, Ala354–Ser374, Thr396–Ser416, Trp425–Tyr445, Leu544–Phe564, Ser612–Phe632, and Ile721–Ser741.

This sequence belongs to the complex I subunit 5 family. In terms of assembly, NDH is composed of at least 16 different subunits, 5 of which are encoded in the nucleus.

It localises to the plastid. The protein resides in the chloroplast thylakoid membrane. The catalysed reaction is a plastoquinone + NADH + (n+1) H(+)(in) = a plastoquinol + NAD(+) + n H(+)(out). It carries out the reaction a plastoquinone + NADPH + (n+1) H(+)(in) = a plastoquinol + NADP(+) + n H(+)(out). In terms of biological role, NDH shuttles electrons from NAD(P)H:plastoquinone, via FMN and iron-sulfur (Fe-S) centers, to quinones in the photosynthetic chain and possibly in a chloroplast respiratory chain. The immediate electron acceptor for the enzyme in this species is believed to be plastoquinone. Couples the redox reaction to proton translocation, and thus conserves the redox energy in a proton gradient. The chain is NAD(P)H-quinone oxidoreductase subunit 5, chloroplastic (ndhF) from Brachypodium distachyon (Purple false brome).